Here is an 85-residue protein sequence, read N- to C-terminus: Fungal defensin triintsin (85 aa).

An N-terminal signal peptide occupies residues 1-21 (MQFTKLATVLIVSLMGSAAIA). Residues 22-47 (APSVDNAPAVAAEEVAAAPAENLEKR) constitute a propeptide that is removed on maturation. 3 disulfides stabilise this stretch: Cys51-Cys72, Cys58-Cys80, and Cys62-Cys82.

The protein belongs to the invertebrate defensin family. Post-translationally, disulfide bonds are essential for antimicrobial activity.

The protein localises to the secreted. Its function is as follows. Antimicrobial peptide with broad-spectrum activity against Gram-positive bacteria, Gram-negative bacteria, and fungi. Also inhibits clinical isolates, including methicillin-resistant S.aureus (MRSA) (MIC=32 uM), K.pneumoniae, C.albicans and C.parapsilosis. Displays minimal inhibitory concentration (MIC) values similar to minimal bactericidal concentrations (MBC), suggesting a disruptive mechanism mode of action associated with membrane lysis. In vitro, shows hemolytic activity against human red blood cells. The sequence is that of Fungal defensin triintsin from Trichophyton interdigitale (strain MR816).